The sequence spans 66 residues: MPKQKTHRASAKRFKRTGNGGLKRFRAYTSHRFHGKTVKQRRQLRKSSMVSKGDFKRIRRMVATMR.

Basic residues predominate over residues 1–16; that stretch reads MPKQKTHRASAKRFKR. The tract at residues 1–20 is disordered; it reads MPKQKTHRASAKRFKRTGNG.

The protein belongs to the bacterial ribosomal protein bL35 family.

The polypeptide is Large ribosomal subunit protein bL35 (Lactococcus lactis subsp. lactis (strain IL1403) (Streptococcus lactis)).